The primary structure comprises 43 residues: MKKAVIVENKGCATCSIGAACLVDGPIPDFEIAGATGLFGLWG.

The propeptide occupies 1–8 (MKKAVIVE). Residues 9–43 (NKGCATCSIGAACLVDGPIPDFEIAGATGLFGLWG) constitute a cross-link (cyclopeptide (Asn-Gly)). A cross-link (2-cysteinyl-D-phenylalanine (Cys-Phe)) is located at residues 12 to 39 (CATCSIGAACLVDGPIPDFEIAGATGLF). The 2-cysteinyl-D-allo-threonine (Cys-Thr) cross-link spans 15 to 36 (CSIGAACLVDGPIPDFEIAGAT). Residues 21–30 (CLVDGPIPDF) constitute a cross-link (2-cysteinyl-L-phenylalanine (Cys-Phe)).

This sequence belongs to the bacteriocin class V family. This sactipeptide undergoes unique processing steps that include proteolytic cleavage after Glu-8, and covalent linkage of the alpha-amino of Asn-9 with the carboxyl of Gly-43 to form a cyclopeptide. Thioether cross-links are formed between cysteines and the alpha-carbons of other amino acids, Cys-12 to Phe-39, Cys-15 to Thr-36, and Cys-21 to Phe-30. In forming these cross-links, Thr-36 and Phe-39 are converted to D-amino acids. Propeptide cleavage and cyclopeptide formation only occur after all 3 thioether cross-links are formed.

It is found in the secreted. In terms of biological role, has bacteriocidal activity against some Gram-positive bacteria such as Listeria, some species of Bacillus and E.faecium. A single mutation (Thr-14-Ile) confers hemolytic activity against rabbit and human blood. This Bacillus subtilis (strain 168) protein is Subtilosin-A (sboA).